The sequence spans 357 residues: MTRPTLRETVARLAPGTGLRDGLERILRGRTGALIVLGNDENVEAICDGGFALDVRYAPTRLRELAKMDGAVVLSTDGSRIVRANVQLVPDPSIATDESGTRHRSAERAAIQTGYPVISVSHSMNIVTVYVGGERHVVADSATILSRANQAIATLERYKIRLDEVSRQLSRAEIEDFVTLRDVLTVVQRLELVRRIGQVIDNDVVELGTDGRQLRLQLDELLGGNDNARELIVRDYHASPEPLSEAQMTATLDELDALSDTELLDFTALAKVFGYPTTTEAQDSAVSPRGYRALAGIPRLQFAHADLLVRSFGTLQNVLAASASDLQSIDGIGAMWARHVREGLSQLAESTITDSLS.

One can recognise a DAC domain in the interval R3–S141. ATP is bound by residues G70, L88, and T101 to S105.

The protein belongs to the DisA family. As to quaternary structure, homooctamer. Mg(2+) serves as cofactor.

The catalysed reaction is 2 ATP = 3',3'-c-di-AMP + 2 diphosphate. Its function is as follows. Participates in a DNA-damage check-point. DisA forms globular foci that rapidly scan along the chromosomes searching for lesions. Functionally, also has diadenylate cyclase activity, catalyzing the condensation of 2 ATP molecules into cyclic di-AMP (c-di-AMP). c-di-AMP likely acts as a signaling molecule that may couple DNA integrity with a cellular process. The polypeptide is DNA integrity scanning protein DisA (Mycobacterium avium (strain 104)).